The chain runs to 302 residues: MNSSPARAVRALVQSQSRQRPTLERACLSCATVVHARRCFSVLDRPPPNYPGHVPLTRVERAGLAVGSGLWSLLDPRRGDLIAAFAEATATPYFVPRLRDAMLASPTGRRILRDRPRITSSSLDLPRLRSLPQGTVGATYVAWLDREGVTPDTRAHVRYVDDEECAYVLQRYRESHDFYHALTALPVVREGEVALKAFEFANTLLPMTGLATFAAFTLREGERRRFVDTYLPWAVKNGLRAKEIINVYWEEEMETDVVDLRKALGIEPPPDMRDARKRERDARRRRKQLETEAQQGLDAASL.

The N-terminal 19 residues, 1 to 19 (MNSSPARAVRALVQSQSRQ), are a transit peptide targeting the mitochondrion. Residues His176, Asp177, His180, and Glu192 each contribute to the Zn(2+) site. The span at 268-282 (PPPDMRDARKRERDA) shows a compositional bias: basic and acidic residues. The segment at 268–302 (PPPDMRDARKRERDARRRRKQLETEAQQGLDAASL) is disordered.

This sequence belongs to the COQ4 family. In terms of assembly, component of a multi-subunit COQ enzyme complex, composed of at least COQ3, COQ4, COQ5, COQ6, COQ7 and COQ9. Zn(2+) is required as a cofactor.

It is found in the mitochondrion inner membrane. The catalysed reaction is a 4-hydroxy-3-methoxy-5-(all-trans-polyprenyl)benzoate + H(+) = a 2-methoxy-6-(all-trans-polyprenyl)phenol + CO2. Its pathway is cofactor biosynthesis; ubiquinone biosynthesis. Lyase that catalyzes the C1-decarboxylation of 4-hydroxy-3-methoxy-5-(all-trans-polyprenyl)benzoic acid into 2-methoxy-6-(all-trans-polyprenyl)phenol during ubiquinone biosynthesis. This is Ubiquinone biosynthesis protein COQ4, mitochondrial from Pyricularia oryzae (strain 70-15 / ATCC MYA-4617 / FGSC 8958) (Rice blast fungus).